The primary structure comprises 260 residues: Indole-3-glycerol phosphate synthase (260 aa).

It belongs to the TrpC family.

It catalyses the reaction 1-(2-carboxyphenylamino)-1-deoxy-D-ribulose 5-phosphate + H(+) = (1S,2R)-1-C-(indol-3-yl)glycerol 3-phosphate + CO2 + H2O. The protein operates within amino-acid biosynthesis; L-tryptophan biosynthesis; L-tryptophan from chorismate: step 4/5. The sequence is that of Indole-3-glycerol phosphate synthase from Neisseria gonorrhoeae (strain NCCP11945).